The following is a 109-amino-acid chain: Nucleoid-associated protein BUsg_467 (109 aa).

It belongs to the YbaB/EbfC family. Homodimer.

Its subcellular location is the cytoplasm. It localises to the nucleoid. Functionally, binds to DNA and alters its conformation. May be involved in regulation of gene expression, nucleoid organization and DNA protection. The sequence is that of Nucleoid-associated protein BUsg_467 from Buchnera aphidicola subsp. Schizaphis graminum (strain Sg).